The primary structure comprises 311 residues: Probable protein phosphatase 2C 59 (311 aa).

Over residues 1–14 (MGYLNSVLSSSSQV) the composition is skewed to low complexity. The interval 1-26 (MGYLNSVLSSSSQVHSDDGPVSGGGL) is disordered. Residues 33–279 (SYGYASSPGK…DNITCVVVRF (247 aa)) form the PPM-type phosphatase domain. Mn(2+) is bound by residues Asp69, Gly70, Asp231, and Asp270.

The protein belongs to the PP2C family. In terms of assembly, interacts with the Pseudomonas syringae pv. maculicola effector HopW1-1 (via C-terminus). The cofactor is Mg(2+). It depends on Mn(2+) as a cofactor.

The enzyme catalyses O-phospho-L-seryl-[protein] + H2O = L-seryl-[protein] + phosphate. The catalysed reaction is O-phospho-L-threonyl-[protein] + H2O = L-threonyl-[protein] + phosphate. Its activity is regulated as follows. Inhibited by sodium fluoride (NaF). Its function is as follows. Protein phosphatase that modulates defense response to pathogenic bacteria, conferring resistance and promoting salicylic acid (SA) accumulation. In Arabidopsis thaliana (Mouse-ear cress), this protein is Probable protein phosphatase 2C 59 (WIN2).